A 470-amino-acid chain; its full sequence is Dihydrolipoyl dehydrogenase (470 aa).

Residues 39-47 (EKGNLGGVC), Lys-56, and Ala-119 contribute to the FAD site. A disulfide bridge links Cys-47 with Cys-52. NAD(+) contacts are provided by residues 183–187 (GGGYI), Glu-206, and 271–274 (TVGR). Positions 314 and 322 each coordinate FAD. His-446 acts as the Proton acceptor in catalysis.

Belongs to the class-I pyridine nucleotide-disulfide oxidoreductase family. Homodimer. Identified in a complex with PdhC. FAD is required as a cofactor.

It localises to the cytoplasm. The enzyme catalyses N(6)-[(R)-dihydrolipoyl]-L-lysyl-[protein] + NAD(+) = N(6)-[(R)-lipoyl]-L-lysyl-[protein] + NADH + H(+). Functionally, lipoamide dehydrogenase is a component of the alpha-ketoacid dehydrogenase complexes. The sequence is that of Dihydrolipoyl dehydrogenase (pdhD) from Geobacillus stearothermophilus (Bacillus stearothermophilus).